Here is a 101-residue protein sequence, read N- to C-terminus: uncharacterized protein (101 aa).

Its subcellular location is the plastid. The protein localises to the chloroplast. This is an uncharacterized protein from Chlamydomonas reinhardtii (Chlamydomonas smithii).